Reading from the N-terminus, the 278-residue chain is HTH-type transcriptional activator RhaS (278 aa).

The HTH araC/xylS-type domain maps to 174-272 (NLLLAWLEDH…NWSPRDIRQG (99 aa)). 2 DNA-binding regions (H-T-H motif) span residues 191–212 (DAVA…KQQT) and 239–262 (VTDI…RREF).

As to quaternary structure, binds DNA as a dimer.

Its subcellular location is the cytoplasm. In terms of biological role, activates expression of the rhaBAD and rhaT operons. The protein is HTH-type transcriptional activator RhaS of Escherichia coli O127:H6 (strain E2348/69 / EPEC).